We begin with the raw amino-acid sequence, 255 residues long: Staphylococcal secretory antigen ssaA1 (255 aa).

The first 26 residues, 1–26, serve as a signal peptide directing secretion; sequence MKKIVTATIATAGLATIAFAGHDAQA. Tandem repeats lie at residues 75 to 78, 88 to 91, and 98 to 101. Residues 75–101 are 3 X 4 AA repeats of Y-N-N-Y; it reads YNNYNTYSYNNASYNNYYNHSYQYNNY. Residues 134–255 enclose the Peptidase C51 domain; sequence AAPSSNGRSI…NQAGSYNFIH (122 aa).

It is found in the secreted. Functionally, not known; immunogenic protein. The sequence is that of Staphylococcal secretory antigen ssaA1 (ssaA1) from Staphylococcus aureus (strain MW2).